A 428-amino-acid chain; its full sequence is Gamma-glutamyl phosphate reductase (428 aa).

It belongs to the gamma-glutamyl phosphate reductase family.

It is found in the cytoplasm. The enzyme catalyses L-glutamate 5-semialdehyde + phosphate + NADP(+) = L-glutamyl 5-phosphate + NADPH + H(+). It participates in amino-acid biosynthesis; L-proline biosynthesis; L-glutamate 5-semialdehyde from L-glutamate: step 2/2. In terms of biological role, catalyzes the NADPH-dependent reduction of L-glutamate 5-phosphate into L-glutamate 5-semialdehyde and phosphate. The product spontaneously undergoes cyclization to form 1-pyrroline-5-carboxylate. The protein is Gamma-glutamyl phosphate reductase of Streptomyces avermitilis (strain ATCC 31267 / DSM 46492 / JCM 5070 / NBRC 14893 / NCIMB 12804 / NRRL 8165 / MA-4680).